Reading from the N-terminus, the 224-residue chain is 2,5-diamino-6-ribosylamino-4(3H)-pyrimidinone 5'-phosphate reductase (224 aa).

NADP(+) contacts are provided by residues Thr57, Asp61, 82 to 85 (STAN), Val131, and 153 to 156 (GASI).

The protein belongs to the HTP reductase family. Homodimer.

The catalysed reaction is 2,5-diamino-6-(1-D-ribitylamino)pyrimidin-4(3H)-one 5'-phosphate + NADP(+) = 2,5-diamino-6-(1-D-ribosylamino)pyrimidin-4(3H)-one 5'-phosphate + NADPH + H(+). It catalyses the reaction 2,5-diamino-6-(1-D-ribitylamino)pyrimidin-4(3H)-one 5'-phosphate + NAD(+) = 2,5-diamino-6-(1-D-ribosylamino)pyrimidin-4(3H)-one 5'-phosphate + NADH + H(+). Its pathway is cofactor biosynthesis; riboflavin biosynthesis. Functionally, catalyzes an early step in riboflavin biosynthesis, the NADPH-dependent reduction of the ribose side chain of 2,5-diamino-6-ribosylamino-4(3H)-pyrimidinone 5'-phosphate, yielding 2,5-diamino-6-ribitylamino-4(3H)-pyrimidinone 5'-phosphate. The chain is 2,5-diamino-6-ribosylamino-4(3H)-pyrimidinone 5'-phosphate reductase (ribD2) from Aquifex aeolicus (strain VF5).